We begin with the raw amino-acid sequence, 245 residues long: Adapter protein MecA (245 aa).

This sequence belongs to the MecA family. In terms of assembly, homodimer.

Functionally, enables the recognition and targeting of unfolded and aggregated proteins to the ClpC protease or to other proteins involved in proteolysis. The protein is Adapter protein MecA of Streptococcus pneumoniae (strain Hungary19A-6).